The chain runs to 359 residues: tRNA-specific 2-thiouridylase MnmA (359 aa).

Residues 9–16 and M35 each bind ATP; that span reads GISGGVDS. Residues 95–97 form an interaction with target base in tRNA region; sequence NPD. The Nucleophile role is filled by C100. C100 and C197 are oxidised to a cystine. ATP is bound at residue G124. The segment at 147–149 is interaction with tRNA; that stretch reads KDQ. The active-site Cysteine persulfide intermediate is C197. The interaction with tRNA stretch occupies residues 309–310; sequence RY.

It belongs to the MnmA/TRMU family.

It is found in the cytoplasm. It carries out the reaction S-sulfanyl-L-cysteinyl-[protein] + uridine(34) in tRNA + AH2 + ATP = 2-thiouridine(34) in tRNA + L-cysteinyl-[protein] + A + AMP + diphosphate + H(+). Its function is as follows. Catalyzes the 2-thiolation of uridine at the wobble position (U34) of tRNA, leading to the formation of s(2)U34. The sequence is that of tRNA-specific 2-thiouridylase MnmA from Francisella philomiragia subsp. philomiragia (strain ATCC 25017 / CCUG 19701 / FSC 153 / O#319-036).